An 881-amino-acid polypeptide reads, in one-letter code: Squamosa promoter-binding-like protein 1 (881 aa).

Residues 49-69 (FPLGNSSNSSSSCSDEGNDKK) form a disordered region. The span at 53–62 (NSSNSSSSCS) shows a compositional bias: low complexity. The tract at residues 96–187 (PAKKTKSGAV…RKTNPEPGAN (92 aa)) is sufficient and necessary for DNA binding. Residues 103 to 180 (GAVCQVENCE…AGHNKRRRKT (78 aa)) form an SBP-type zinc finger. Residues cysteine 106, cysteine 111, cysteine 128, histidine 131, cysteine 147, cysteine 150, histidine 154, and cysteine 166 each coordinate Zn(2+). Residues 163–179 (KRSCRRRLAGHNKRRRK) carry the Bipartite nuclear localization signal motif. Positions 170-179 (LAGHNKRRRK) are enriched in basic residues. Disordered regions lie at residues 170-193 (LAGHNKRRRKTNPEPGANGNPSDD) and 274-358 (FSAR…EDAQ). Over residues 275–284 (SARQDGTATE) the composition is skewed to polar residues. Over residues 285 to 295 (NRSEKQVKMND) the composition is skewed to basic and acidic residues. Residues 319–338 (PATSSLDYPSWIHQSSPPQT) show a composition bias toward polar residues. A compositionally biased stretch (low complexity) spans 339–356 (SRNSDSASDQSPSSSSED).

Zn(2+) is required as a cofactor.

The protein localises to the nucleus. In terms of biological role, trans-acting factor that binds specifically to the consensus nucleotide sequence 5'-TNCGTACAA-3' of AP1 promoter. Binds specifically to the 5'-GTAC-3' core sequence. The chain is Squamosa promoter-binding-like protein 1 (SPL1) from Arabidopsis thaliana (Mouse-ear cress).